The primary structure comprises 634 residues: uncharacterized protein (634 aa).

A signal peptide spans 1–40; sequence MWLQQRLKGLPGLLSSSWARRLLCLLGLLLLLLWFGGSGA. At 41–589 the chain is on the extracellular side; that stretch reads RRAAGGLHLL…DEHMAQQDPG (549 aa). An N-linked (GlcNAc...) asparagine glycan is attached at asparagine 363. The chain crosses the membrane as a helical span at residues 590–610; the sequence is LPFLFWFSVASLITLFHLFLF. The Cytoplasmic segment spans residues 611–634; it reads KLIYNEYCGPGAKPLFRSKEDPSV.

Its subcellular location is the membrane. This is an uncharacterized protein from Homo sapiens (Human).